The sequence spans 459 residues: Ribulose bisphosphate carboxylase (459 aa).

Asparagine 111 serves as a coordination point for substrate. Catalysis depends on lysine 166, which acts as the Proton acceptor. Substrate is bound at residue lysine 168. Positions 191, 193, and 194 each coordinate Mg(2+). At lysine 191 the chain carries N6-carboxylysine. The Proton acceptor role is filled by histidine 287. Arginine 288, histidine 321, and serine 368 together coordinate substrate.

Belongs to the RuBisCO large chain family. Type II subfamily. As to quaternary structure, homodimer. Mg(2+) is required as a cofactor.

The enzyme catalyses 2 (2R)-3-phosphoglycerate + 2 H(+) = D-ribulose 1,5-bisphosphate + CO2 + H2O. The catalysed reaction is D-ribulose 1,5-bisphosphate + O2 = 2-phosphoglycolate + (2R)-3-phosphoglycerate + 2 H(+). In terms of biological role, ruBisCO catalyzes two reactions: the carboxylation of D-ribulose 1,5-bisphosphate, the primary event in carbon dioxide fixation, as well as the oxidative fragmentation of the pentose substrate. Both reactions occur simultaneously and in competition at the same active site. This Polaromonas naphthalenivorans (strain CJ2) protein is Ribulose bisphosphate carboxylase.